A 664-amino-acid polypeptide reads, in one-letter code: DNA ligase (664 aa).

NAD(+) is bound by residues 32–36 (DKEYD) and 80–81 (SL). The active-site N6-AMP-lysine intermediate is the Lys122. 3 residues coordinate NAD(+): Arg144, Glu178, and Lys314. Zn(2+) is bound by residues Cys407, Cys410, Cys423, and Cys429. Residues 587-664 (IDENPFMDKT…NEEEFSNKIK (78 aa)) form the BRCT domain.

The protein belongs to the NAD-dependent DNA ligase family. LigA subfamily. The cofactor is Mg(2+). It depends on Mn(2+) as a cofactor.

The catalysed reaction is NAD(+) + (deoxyribonucleotide)n-3'-hydroxyl + 5'-phospho-(deoxyribonucleotide)m = (deoxyribonucleotide)n+m + AMP + beta-nicotinamide D-nucleotide.. Functionally, DNA ligase that catalyzes the formation of phosphodiester linkages between 5'-phosphoryl and 3'-hydroxyl groups in double-stranded DNA using NAD as a coenzyme and as the energy source for the reaction. It is essential for DNA replication and repair of damaged DNA. The sequence is that of DNA ligase from Clostridium botulinum (strain Okra / Type B1).